Consider the following 122-residue polypeptide: MSADERFPRGARLLRRREFEGVLRAPEWRTANRYFRVSARQNQCGRPRLGLAVPKRVLRLAIQRHRVKRIIRESFRVRQGGLPDHDFVVGVRGAVAEADNATLFSALEELWAHARGRPCDGS.

Belongs to the RnpA family. In terms of assembly, consists of a catalytic RNA component (M1 or rnpB) and a protein subunit.

It catalyses the reaction Endonucleolytic cleavage of RNA, removing 5'-extranucleotides from tRNA precursor.. In terms of biological role, RNaseP catalyzes the removal of the 5'-leader sequence from pre-tRNA to produce the mature 5'-terminus. It can also cleave other RNA substrates such as 4.5S RNA. The protein component plays an auxiliary but essential role in vivo by binding to the 5'-leader sequence and broadening the substrate specificity of the ribozyme. In Halorhodospira halophila (strain DSM 244 / SL1) (Ectothiorhodospira halophila (strain DSM 244 / SL1)), this protein is Ribonuclease P protein component.